Reading from the N-terminus, the 108-residue chain is U3-lycotoxin-Ls1w (108 aa).

The signal sequence occupies residues 1-20 (MKFVLLFGVLLVTLFSYSSA). A propeptide spanning residues 21 to 44 (EMLDDFDQADEDELLSLIEKEEAR) is cleaved from the precursor. 4 disulfide bridges follow: cysteine 48–cysteine 63, cysteine 55–cysteine 72, cysteine 62–cysteine 87, and cysteine 74–cysteine 85.

The protein belongs to the neurotoxin 19 (CSTX) family. 01 subfamily. As to expression, expressed by the venom gland.

The protein resides in the secreted. The polypeptide is U3-lycotoxin-Ls1w (Lycosa singoriensis (Wolf spider)).